Consider the following 400-residue polypeptide: UDP-glucuronate:glycolipid 2-beta-glucuronosyltransferase (400 aa).

Asp-157 functions as the Proton acceptor in the catalytic mechanism. UDP-alpha-D-glucuronate is bound by residues 230-231, 272-273, Tyr-292, and 306-310; these read SM, EM, and MKLLQ. A disordered region spans residues 377-400; it reads PETRLYPHPPTAAPQLSSEAALSH. The span at 390 to 400 shows a compositional bias: polar residues; sequence PQLSSEAALSH.

The protein belongs to the glycosyltransferase 70 family.

It localises to the cell inner membrane. It catalyses the reaction alpha-D-Man-(1-&gt;3)-beta-D-Glc-(1-&gt;4)-alpha-D-Glc-1-di-trans,octa-cis-undecaprenyl diphosphate + UDP-alpha-D-glucuronate = beta-D-GlcA-(1-&gt;2)-alpha-D-Man-(1-&gt;3)-beta-D-Glc-(1-&gt;4)-alpha-D-Glc-di-trans,octa-cis-undecaprenyl diphosphate + UDP + H(+). It participates in glycan biosynthesis; xanthan biosynthesis. Its function is as follows. Catalyzes the transfer of a glucuronic acid (GlcA) residue from UDP-glucuronate to mannose-alpha-1,3-glucose-beta-1,4-glucose-P-P-polyisoprenyl to form the lipid-linked tetrasaccharide GlcA-Man-Glc(2)-PP-Pol, with a glucuronic acid-beta-mannose linkage. Is involved in the biosynthesis of the exopolysaccharide xanthan, since it catalyzes the fourth glycosylation step in the assembly of the pentasaccharide-P-P-polyisoprenyl repeating unit of xanthan. Is unable to use the trisaccharide acceptor freed from the pyrophosphate lipid moiety. Does not show specificity for the lipidic portion of the acceptor. Shows diminished activity when tested with 6-O-acetyl-mannose-alpha-1,3-glucose-beta-1,4-glucose-P-P-polyisoprenyl, a putative intermediate in the synthesis of xanthan; this could indicate that acetylation of the internal mannose takes place after the formation of the GumK product. In Xanthomonas campestris pv. campestris, this protein is UDP-glucuronate:glycolipid 2-beta-glucuronosyltransferase (gumK).